Consider the following 127-residue polypeptide: Large ribosomal subunit protein bL12 (127 aa).

A disordered region spans residues 94-114; the sequence is VDGAPSTLKEAASKEEAEEAK. Residues 104–114 are compositionally biased toward basic and acidic residues; sequence AASKEEAEEAK.

Belongs to the bacterial ribosomal protein bL12 family. In terms of assembly, homodimer. Part of the ribosomal stalk of the 50S ribosomal subunit. Forms a multimeric L10(L12)X complex, where L10 forms an elongated spine to which 2 to 4 L12 dimers bind in a sequential fashion. Binds GTP-bound translation factors.

Its function is as follows. Forms part of the ribosomal stalk which helps the ribosome interact with GTP-bound translation factors. Is thus essential for accurate translation. In Nitratidesulfovibrio vulgaris (strain ATCC 29579 / DSM 644 / CCUG 34227 / NCIMB 8303 / VKM B-1760 / Hildenborough) (Desulfovibrio vulgaris), this protein is Large ribosomal subunit protein bL12.